The primary structure comprises 85 residues: UPF0181 protein YPO1774/y2534/YP_1619 (85 aa).

Residues 50 to 85 are disordered; sequence QAMAIFEDHDFDEHTESDYRRDDEPDADDIEDPYEG. Basic and acidic residues predominate over residues 55 to 72; that stretch reads FEDHDFDEHTESDYRRDD. The segment covering 73-85 has biased composition (acidic residues); it reads EPDADDIEDPYEG.

Belongs to the UPF0181 family.

The protein is UPF0181 protein YPO1774/y2534/YP_1619 of Yersinia pestis.